The primary structure comprises 270 residues: Phosphonates import ATP-binding protein PhnC 1 (270 aa).

The region spanning 2-245 (LVVEGLTCRF…IARELYDLEA (244 aa)) is the ABC transporter domain. Residue 34-41 (GRSGAGKS) participates in ATP binding.

It belongs to the ABC transporter superfamily. Phosphonates importer (TC 3.A.1.9.1) family. As to quaternary structure, the complex is composed of two ATP-binding proteins (PhnC), two transmembrane proteins (PhnE) and a solute-binding protein (PhnD).

Its subcellular location is the cell inner membrane. The enzyme catalyses phosphonate(out) + ATP + H2O = phosphonate(in) + ADP + phosphate + H(+). Its function is as follows. Part of the ABC transporter complex PhnCDE involved in phosphonates import. Responsible for energy coupling to the transport system. In Rhodopseudomonas palustris (strain ATCC BAA-98 / CGA009), this protein is Phosphonates import ATP-binding protein PhnC 1.